A 440-amino-acid chain; its full sequence is Beta-1,3-galactosyl-O-glycosyl-glycoprotein beta-1,6-N-acetylglucosaminyltransferase 3 (440 aa).

Residues 1–12 (MKMTGWKKKLCR) are Cytoplasmic-facing. The chain crosses the membrane as a helical; Signal-anchor for type II membrane protein span at residues 13–30 (GHHLWALGCYMLLAVVAL). Over 31-440 (RLSLRLKCDV…RHKAIYGTEL (410 aa)) the chain is Lumenal. 4 disulfide bridges follow: Cys73/Cys230, Cys164/Cys384, Cys185/Cys212, and Cys393/Cys425. The N-linked (GlcNAc...) asparagine glycan is linked to Asn108.

Belongs to the glycosyltransferase 14 family. N-glycosylated.

It localises to the golgi apparatus membrane. The catalysed reaction is a 3-O-[beta-D-galactosyl-(1-&gt;3)-N-acetyl-alpha-D-galactosaminyl]-L-seryl-[protein] + UDP-N-acetyl-alpha-D-glucosamine = 3-O-{beta-D-galactosyl-(1-&gt;3)-[N-acetyl-beta-D-glucosaminyl-(1-&gt;6)]-N-acetyl-alpha-D-galactosaminyl}-L-seryl-[protein] + UDP + H(+). It catalyses the reaction a 3-O-[beta-D-galactosyl-(1-&gt;3)-N-acetyl-alpha-D-galactosaminyl]-L-threonyl-[protein] + UDP-N-acetyl-alpha-D-glucosamine = a 3-O-{beta-D-galactosyl-(1-&gt;3)-[N-acetyl-beta-D-glucosaminyl-(1-&gt;6)]-N-acetyl-alpha-D-galactosaminyl}-L-threonyl-[protein] + UDP + H(+). The enzyme catalyses a beta-D-Gal-(1-&gt;4)-beta-D-GlcNAc-(1-&gt;3)-beta-D-Gal-(1-&gt;4)-beta-D-GlcNAc derivative + UDP-N-acetyl-alpha-D-glucosamine = a beta-D-Gal-(1-&gt;4)-beta-D-GlcNAc-(1-&gt;3)-[beta-D-GlcNAc-(1-&gt;6)]-beta-D-Gal-(1-&gt;4)-N-acetyl-beta-D-glucosaminyl derivative + UDP + H(+). It carries out the reaction 3-O-[N-acetyl-beta-D-glucosaminyl-(1-&gt;3)-N-acetyl-alpha-D-galactosaminyl]-L-seryl-[protein] + UDP-N-acetyl-alpha-D-glucosamine = 3-O-[N-acetyl-beta-D-glucosaminyl-(1-&gt;3)-[N-acetyl-beta-D-glucosaminyl-(1-&gt;6)]-N-acetyl-alpha-D-galactosaminyl]-L-seryl-[protein] + UDP + H(+). The catalysed reaction is a 3-O-[N-acetyl-beta-D-glucosaminyl-(1-&gt;3)-N-acetyl-alpha-D-galactosaminyl]-L-threonyl-[protein] + UDP-N-acetyl-alpha-D-glucosamine = 3-O-[N-acetyl-beta-D-glucosaminyl-(1-&gt;3)-[N-acetyl-beta-D-glucosaminyl-(1-&gt;6)]-N-acetyl-alpha-D-galactosaminyl]-L-threonyl-[protein] + UDP + H(+). It participates in protein modification; protein glycosylation. In terms of biological role, glycosyltransferase that can synthesize all known mucin beta 6 N-acetylglucosaminides. Mediates core 2 and core 4 O-glycan branching, 2 important steps in mucin-type biosynthesis. Also has I-branching enzyme activity by converting linear into branched poly-N-acetyllactosaminoglycans, leading to introduce the blood group I antigen during embryonic development. This Ovis aries (Sheep) protein is Beta-1,3-galactosyl-O-glycosyl-glycoprotein beta-1,6-N-acetylglucosaminyltransferase 3 (GCNT3).